We begin with the raw amino-acid sequence, 412 residues long: Serine hydroxymethyltransferase (412 aa).

(6S)-5,6,7,8-tetrahydrofolate-binding positions include leucine 117 and 121-123 (GHL). An N6-(pyridoxal phosphate)lysine modification is found at lysine 226.

It belongs to the SHMT family. Homodimer. Requires pyridoxal 5'-phosphate as cofactor.

The protein localises to the cytoplasm. It carries out the reaction (6R)-5,10-methylene-5,6,7,8-tetrahydrofolate + glycine + H2O = (6S)-5,6,7,8-tetrahydrofolate + L-serine. Its pathway is one-carbon metabolism; tetrahydrofolate interconversion. The protein operates within amino-acid biosynthesis; glycine biosynthesis; glycine from L-serine: step 1/1. Functionally, catalyzes the reversible interconversion of serine and glycine with tetrahydrofolate (THF) serving as the one-carbon carrier. This reaction serves as the major source of one-carbon groups required for the biosynthesis of purines, thymidylate, methionine, and other important biomolecules. Also exhibits THF-independent aldolase activity toward beta-hydroxyamino acids, producing glycine and aldehydes, via a retro-aldol mechanism. This Staphylococcus aureus (strain MW2) protein is Serine hydroxymethyltransferase.